A 132-amino-acid polypeptide reads, in one-letter code: Large ribosomal subunit protein bL17 (132 aa).

The protein belongs to the bacterial ribosomal protein bL17 family. As to quaternary structure, part of the 50S ribosomal subunit. Contacts protein L32.

This chain is Large ribosomal subunit protein bL17, found in Cellvibrio japonicus (strain Ueda107) (Pseudomonas fluorescens subsp. cellulosa).